Here is a 128-residue protein sequence, read N- to C-terminus: MSSIPEGLKYSAEHEWIAEAGAAGTVRVGITDFAQDALGDVVYVDLPEVGTEVTAGTAVGEVESTKSVSDIYAPVSGTVAAVNDELDGEPGLVNSAPYEGGWLFEITLADEAQLEGLMDAEGYASHTS.

Residues 25–107 form the Lipoyl-binding domain; sequence TVRVGITDFA…YEGGWLFEIT (83 aa). Position 66 is an N6-lipoyllysine (lysine 66).

This sequence belongs to the GcvH family. The glycine cleavage system is composed of four proteins: P, T, L and H. The cofactor is (R)-lipoate.

In terms of biological role, the glycine cleavage system catalyzes the degradation of glycine. The H protein shuttles the methylamine group of glycine from the P protein to the T protein. The chain is Glycine cleavage system H protein from Micrococcus luteus (strain ATCC 4698 / DSM 20030 / JCM 1464 / CCM 169 / CCUG 5858 / IAM 1056 / NBRC 3333 / NCIMB 9278 / NCTC 2665 / VKM Ac-2230) (Micrococcus lysodeikticus).